The chain runs to 217 residues: Thiamine-phosphate synthase (217 aa).

4-amino-2-methyl-5-(diphosphooxymethyl)pyrimidine is bound by residues 38–42 (QYRDK) and asparagine 70. Mg(2+) is bound by residues aspartate 71 and aspartate 90. Residue serine 109 participates in 4-amino-2-methyl-5-(diphosphooxymethyl)pyrimidine binding. 136–138 (SIT) is a binding site for 2-[(2R,5Z)-2-carboxy-4-methylthiazol-5(2H)-ylidene]ethyl phosphate. Residue lysine 139 coordinates 4-amino-2-methyl-5-(diphosphooxymethyl)pyrimidine. Glycine 166 provides a ligand contact to 2-[(2R,5Z)-2-carboxy-4-methylthiazol-5(2H)-ylidene]ethyl phosphate.

It belongs to the thiamine-phosphate synthase family. The cofactor is Mg(2+).

It catalyses the reaction 2-[(2R,5Z)-2-carboxy-4-methylthiazol-5(2H)-ylidene]ethyl phosphate + 4-amino-2-methyl-5-(diphosphooxymethyl)pyrimidine + 2 H(+) = thiamine phosphate + CO2 + diphosphate. The catalysed reaction is 2-(2-carboxy-4-methylthiazol-5-yl)ethyl phosphate + 4-amino-2-methyl-5-(diphosphooxymethyl)pyrimidine + 2 H(+) = thiamine phosphate + CO2 + diphosphate. The enzyme catalyses 4-methyl-5-(2-phosphooxyethyl)-thiazole + 4-amino-2-methyl-5-(diphosphooxymethyl)pyrimidine + H(+) = thiamine phosphate + diphosphate. The protein operates within cofactor biosynthesis; thiamine diphosphate biosynthesis; thiamine phosphate from 4-amino-2-methyl-5-diphosphomethylpyrimidine and 4-methyl-5-(2-phosphoethyl)-thiazole: step 1/1. In terms of biological role, condenses 4-methyl-5-(beta-hydroxyethyl)thiazole monophosphate (THZ-P) and 2-methyl-4-amino-5-hydroxymethyl pyrimidine pyrophosphate (HMP-PP) to form thiamine monophosphate (TMP). The sequence is that of Thiamine-phosphate synthase from Nitrosococcus oceani (strain ATCC 19707 / BCRC 17464 / JCM 30415 / NCIMB 11848 / C-107).